The chain runs to 243 residues: Probable phosphatase CBO3379/CLC_3322 (243 aa).

Zn(2+) contacts are provided by histidine 8, histidine 10, histidine 16, histidine 41, glutamate 74, histidine 102, histidine 132, aspartate 192, and histidine 194.

Belongs to the PHP family. Requires Zn(2+) as cofactor.

The sequence is that of Probable phosphatase CBO3379/CLC_3322 from Clostridium botulinum (strain Hall / ATCC 3502 / NCTC 13319 / Type A).